We begin with the raw amino-acid sequence, 209 residues long: MKKAIIGRKLGMTQIFDENNRVVPVTVVEAGPCTVVQKKSVEKDGYEAIQVGYGEIREKLVNKPLKGHFEKAGVGLSRMLREFKLENVSEYQVGQEIKVDIFEAGEKIDVTGTSKGKGYQGIIKRWNAHRGPMSHGSKFHRAVGSMGAASYPARTFKNKRMAGHMGNVKSTVLNLEVVKTIPEKNLILIKGGIPGPNKGYVIIRNSIKA.

Belongs to the universal ribosomal protein uL3 family. Part of the 50S ribosomal subunit. Forms a cluster with proteins L14 and L19.

In terms of biological role, one of the primary rRNA binding proteins, it binds directly near the 3'-end of the 23S rRNA, where it nucleates assembly of the 50S subunit. This chain is Large ribosomal subunit protein uL3, found in Clostridium tetani (strain Massachusetts / E88).